The primary structure comprises 353 residues: Holliday junction branch migration complex subunit RuvB (353 aa).

The segment at 4-190 (HYIRFKIMTN…FGIPMRLNFY (187 aa)) is large ATPase domain (RuvB-L). ATP is bound by residues isoleucine 29, arginine 30, glycine 71, lysine 74, threonine 75, threonine 76, 137-139 (EDF), arginine 180, tyrosine 190, and arginine 227. Threonine 75 contributes to the Mg(2+) binding site. The segment at 191–261 (NTEELKKVLN…ISDFGLNRLE (71 aa)) is small ATPAse domain (RuvB-S). Residues 264–353 (RIGLDSNDYR…HQFNIFNEHE (90 aa)) are head domain (RuvB-H). DNA contacts are provided by arginine 300, arginine 319, and arginine 324.

It belongs to the RuvB family. In terms of assembly, homohexamer. Forms an RuvA(8)-RuvB(12)-Holliday junction (HJ) complex. HJ DNA is sandwiched between 2 RuvA tetramers; dsDNA enters through RuvA and exits via RuvB. An RuvB hexamer assembles on each DNA strand where it exits the tetramer. Each RuvB hexamer is contacted by two RuvA subunits (via domain III) on 2 adjacent RuvB subunits; this complex drives branch migration. In the full resolvosome a probable DNA-RuvA(4)-RuvB(12)-RuvC(2) complex forms which resolves the HJ.

The protein resides in the cytoplasm. The enzyme catalyses ATP + H2O = ADP + phosphate + H(+). Its function is as follows. The RuvA-RuvB-RuvC complex processes Holliday junction (HJ) DNA during genetic recombination and DNA repair, while the RuvA-RuvB complex plays an important role in the rescue of blocked DNA replication forks via replication fork reversal (RFR). RuvA specifically binds to HJ cruciform DNA, conferring on it an open structure. The RuvB hexamer acts as an ATP-dependent pump, pulling dsDNA into and through the RuvAB complex. RuvB forms 2 homohexamers on either side of HJ DNA bound by 1 or 2 RuvA tetramers; 4 subunits per hexamer contact DNA at a time. Coordinated motions by a converter formed by DNA-disengaged RuvB subunits stimulates ATP hydrolysis and nucleotide exchange. Immobilization of the converter enables RuvB to convert the ATP-contained energy into a lever motion, pulling 2 nucleotides of DNA out of the RuvA tetramer per ATP hydrolyzed, thus driving DNA branch migration. The RuvB motors rotate together with the DNA substrate, which together with the progressing nucleotide cycle form the mechanistic basis for DNA recombination by continuous HJ branch migration. Branch migration allows RuvC to scan DNA until it finds its consensus sequence, where it cleaves and resolves cruciform DNA. The polypeptide is Holliday junction branch migration complex subunit RuvB (Rickettsia massiliae (strain Mtu5)).